The primary structure comprises 831 residues: AdoMet-dependent rRNA methyltransferase SPB1 (831 aa).

S-adenosyl-L-methionine contacts are provided by Gly58, Trp60, Asp78, Asp94, and Asp119. Lys159 acts as the Proton acceptor in catalysis. Coiled coils occupy residues 346–389 (LTED…QMNM) and 440–479 (NDIN…ERDA). Disordered regions lie at residues 492-535 (DEGW…ADQR) and 565-645 (MNKK…DQQS). Positions 499-510 (ESDKEGSDKETE) are enriched in basic and acidic residues. Composition is skewed to acidic residues over residues 511–526 (ANDY…DDDE), 594–611 (MEVD…DSDF), and 618–631 (PDEE…DNEN). The segment covering 632 to 645 (DVSRKYSKAKDQQS) has biased composition (basic and acidic residues). Residues 729–782 (LEAQGRKKLRALKRLEKLKKKSDMINEDSAKSERDKADEIQKLMKKLTKKQKTK) are a coiled coil.

Belongs to the class I-like SAM-binding methyltransferase superfamily. RNA methyltransferase RlmE family. SPB1 subfamily. As to quaternary structure, component of the nucleolar and nucleoplasmic pre-60S ribosomal particle.

Its subcellular location is the nucleus. The protein resides in the nucleolus. It carries out the reaction a ribonucleotide in rRNA + S-adenosyl-L-methionine = a 2'-O-methylribonucleotide in rRNA + S-adenosyl-L-homocysteine + H(+). In terms of biological role, required for proper assembly of pre-ribosomal particles during the biogenesis of the 60S ribosomal subunit. The chain is AdoMet-dependent rRNA methyltransferase SPB1 from Debaryomyces hansenii (strain ATCC 36239 / CBS 767 / BCRC 21394 / JCM 1990 / NBRC 0083 / IGC 2968) (Yeast).